The primary structure comprises 483 residues: Altronate oxidoreductase (483 aa).

An NAD(+)-binding site is contributed by 18 to 29; that stretch reads IIQFGEGNFLRA.

Belongs to the mannitol dehydrogenase family. UxaB subfamily.

The enzyme catalyses D-altronate + NAD(+) = keto-D-tagaturonate + NADH + H(+). It participates in carbohydrate metabolism; pentose and glucuronate interconversion. The polypeptide is Altronate oxidoreductase (Escherichia coli O6:K15:H31 (strain 536 / UPEC)).